The primary structure comprises 346 residues: UDP-3-O-acylglucosamine N-acyltransferase (346 aa).

The active-site Proton acceptor is the H240.

It belongs to the transferase hexapeptide repeat family. LpxD subfamily. In terms of assembly, homotrimer.

The enzyme catalyses a UDP-3-O-[(3R)-3-hydroxyacyl]-alpha-D-glucosamine + a (3R)-hydroxyacyl-[ACP] = a UDP-2-N,3-O-bis[(3R)-3-hydroxyacyl]-alpha-D-glucosamine + holo-[ACP] + H(+). Its pathway is bacterial outer membrane biogenesis; LPS lipid A biosynthesis. Its function is as follows. Catalyzes the N-acylation of UDP-3-O-acylglucosamine using 3-hydroxyacyl-ACP as the acyl donor. Is involved in the biosynthesis of lipid A, a phosphorylated glycolipid that anchors the lipopolysaccharide to the outer membrane of the cell. In Bacteroides fragilis (strain ATCC 25285 / DSM 2151 / CCUG 4856 / JCM 11019 / LMG 10263 / NCTC 9343 / Onslow / VPI 2553 / EN-2), this protein is UDP-3-O-acylglucosamine N-acyltransferase.